The primary structure comprises 655 residues: p-hydroxybenzoic acid efflux pump subunit AaeB (655 aa).

Transmembrane regions (helical) follow at residues 13 to 33 (FAVKLATAIVLALFVGFHFQL), 38 to 58 (WAVLTAAIVAAGPAFAAGGEP), 69 to 89 (LRIIGTFIGCIAGLVIIIAMI), 93 to 113 (LLMILVCCIWAGFCTWISSLV), 121 to 141 (WGLAGYTALIIVITIQPEPLL), 152 to 172 (EIVIGIVCAIMADLLFSPRSI), 370 to 390 (LFWLWTGWTSGSGAMVMIAVV), 407 to 427 (FIYGTLAALPLGLLYFLVIIP), 431 to 451 (QSMLLLCISLAVLGFFLGIEV), 459 to 479 (MGALASTINIIVLDNPMTFHF), and 482 to 502 (FLDSALGQIVGCVLAFTVILL).

This sequence belongs to the aromatic acid exporter ArAE (TC 2.A.85) family.

It localises to the cell inner membrane. In terms of biological role, forms an efflux pump with AaeA. Could function as a metabolic relief valve, allowing to eliminate certain compounds when they accumulate to high levels in the cell. This Escherichia coli (strain K12 / MC4100 / BW2952) protein is p-hydroxybenzoic acid efflux pump subunit AaeB.